Reading from the N-terminus, the 302-residue chain is Protein ECM11 (302 aa).

Disordered stretches follow at residues 1–67 (MTVI…TDKQ) and 162–187 (SLNG…GSYQ). The segment covering 35–46 (NKPPSSINSRSG) has biased composition (polar residues). Residues 56–67 (APEKKINNTDKQ) show a composition bias toward basic and acidic residues. Residues 162 to 171 (SLNGENTSSP) show a composition bias toward polar residues.

Interacts with CDC6.

It is found in the nucleus. In terms of biological role, may be involved in cell wall organization and biogenesis. The sequence is that of Protein ECM11 (ECM11) from Saccharomyces cerevisiae (strain ATCC 204508 / S288c) (Baker's yeast).